A 560-amino-acid polypeptide reads, in one-letter code: Beta-glucosidase 26, peroxisomal (560 aa).

Residues Gln-33, His-137, 182-183, Tyr-326, Glu-398, Trp-450, 457-458, and Tyr-466 each bind a beta-D-glucoside; these read NE and EW. Residue Glu-183 is the Proton donor of the active site. The Nucleophile role is filled by Glu-398.

Belongs to the glycosyl hydrolase 1 family.

It localises to the peroxisome. The enzyme catalyses Hydrolysis of terminal, non-reducing beta-D-glucosyl residues with release of beta-D-glucose.. Possesses beta-glucosidase activity toward 4-methyl-umbelliferyl-beta-D-glucoside in vitro. Possesses myrosinase activity toward indol-3-yl-methylglucosinolate (I3M) and 4-methoxy-indol-3-yl-methylglucosinolate (4MO-I3M) in vivo. Component of an inducible preinvasion resistance mechanism that prevents penetration of the nonhost fungal species B.graminis and E.pisi. Involved in indole glucosinolate (IGS) activation during pattern-triggered immunity (PTI). Functions as a myrosinase for the breakdown of flg22-triggered IGS. Required for both callose deposition and glucosinolate activation during pathogen-triggered resistance. During fungal attack, required for IGS activation that mediates broad-spectrum antifungal defense. The polypeptide is Beta-glucosidase 26, peroxisomal (Arabidopsis thaliana (Mouse-ear cress)).